A 145-amino-acid polypeptide reads, in one-letter code: Transcription antitermination protein NusB (145 aa).

This sequence belongs to the NusB family.

Functionally, involved in transcription antitermination. Required for transcription of ribosomal RNA (rRNA) genes. Binds specifically to the boxA antiterminator sequence of the ribosomal RNA (rrn) operons. The protein is Transcription antitermination protein NusB of Aromatoleum aromaticum (strain DSM 19018 / LMG 30748 / EbN1) (Azoarcus sp. (strain EbN1)).